We begin with the raw amino-acid sequence, 345 residues long: Small ribosomal subunit biogenesis GTPase RsgA (345 aa).

Residues 1-36 (MSKNKLSKGQERRVQANHQRRLQQRERGAAHWDDQP) form a disordered region. The span at 23 to 34 (QQRERGAAHWDD) shows a compositional bias: basic and acidic residues. Residues 103-273 (RSVLTRPDVY…LIDSPGVREL (171 aa)) form the CP-type G domain. Residues 159-162 (NKID) and 213-221 (GQSGVGKSS) each bind GTP. Residues cysteine 297, cysteine 302, histidine 304, and cysteine 310 each coordinate Zn(2+).

Belongs to the TRAFAC class YlqF/YawG GTPase family. RsgA subfamily. Monomer. Associates with 30S ribosomal subunit, binds 16S rRNA. It depends on Zn(2+) as a cofactor.

The protein resides in the cytoplasm. Its function is as follows. One of several proteins that assist in the late maturation steps of the functional core of the 30S ribosomal subunit. Helps release RbfA from mature subunits. May play a role in the assembly of ribosomal proteins into the subunit. Circularly permuted GTPase that catalyzes slow GTP hydrolysis, GTPase activity is stimulated by the 30S ribosomal subunit. The chain is Small ribosomal subunit biogenesis GTPase RsgA from Sodalis glossinidius (strain morsitans).